A 216-amino-acid polypeptide reads, in one-letter code: Cytidylate kinase (216 aa).

Residue Gly7–Thr15 coordinates ATP.

It belongs to the cytidylate kinase family. Type 1 subfamily.

It is found in the cytoplasm. The catalysed reaction is CMP + ATP = CDP + ADP. It catalyses the reaction dCMP + ATP = dCDP + ADP. This is Cytidylate kinase from Chlamydia caviae (strain ATCC VR-813 / DSM 19441 / 03DC25 / GPIC) (Chlamydophila caviae).